A 185-amino-acid polypeptide reads, in one-letter code: Pap fimbrial major pilin protein (185 aa).

The first 22 residues, 1-22, serve as a signal peptide directing secretion; it reads MIKSVIAGAVAMAVVSFGVNNA. Cys-44 and Cys-83 form a disulfide bridge.

It belongs to the fimbrial protein family.

The protein localises to the secreted. Its subcellular location is the fimbrium. Functionally, polymerizes to form the thick (6.8 nm in diameter) rod of the pilus (also called fimbria). The rod is a right-handed helical cylinder with 3.28 PapA subunits per turn. Pili are polar filaments radiating from the surface of the bacterium to a length of 0.5-1.5 micrometers and numbering 100-300 per cell, and enable bacteria to colonize the epithelium of specific host organs. This chain is Pap fimbrial major pilin protein (papA), found in Escherichia coli.